The chain runs to 174 residues: Large ribosomal subunit protein bL17 (174 aa).

This sequence belongs to the bacterial ribosomal protein bL17 family. Part of the 50S ribosomal subunit. Contacts protein L32.

In Acetivibrio thermocellus (strain ATCC 27405 / DSM 1237 / JCM 9322 / NBRC 103400 / NCIMB 10682 / NRRL B-4536 / VPI 7372) (Clostridium thermocellum), this protein is Large ribosomal subunit protein bL17.